Here is a 393-residue protein sequence, read N- to C-terminus: Tryptophan synthase beta chain (393 aa).

At lysine 85 the chain carries N6-(pyridoxal phosphate)lysine.

This sequence belongs to the TrpB family. As to quaternary structure, tetramer of two alpha and two beta chains. The cofactor is pyridoxal 5'-phosphate.

It catalyses the reaction (1S,2R)-1-C-(indol-3-yl)glycerol 3-phosphate + L-serine = D-glyceraldehyde 3-phosphate + L-tryptophan + H2O. The protein operates within amino-acid biosynthesis; L-tryptophan biosynthesis; L-tryptophan from chorismate: step 5/5. In terms of biological role, the beta subunit is responsible for the synthesis of L-tryptophan from indole and L-serine. The sequence is that of Tryptophan synthase beta chain (trpB) from Helicobacter pylori (strain ATCC 700392 / 26695) (Campylobacter pylori).